The sequence spans 336 residues: Histidinol-phosphate aminotransferase (336 aa).

Position 204 is an N6-(pyridoxal phosphate)lysine (Lys204).

This sequence belongs to the class-II pyridoxal-phosphate-dependent aminotransferase family. Histidinol-phosphate aminotransferase subfamily. Pyridoxal 5'-phosphate is required as a cofactor.

The catalysed reaction is L-histidinol phosphate + 2-oxoglutarate = 3-(imidazol-4-yl)-2-oxopropyl phosphate + L-glutamate. Its pathway is amino-acid biosynthesis; L-histidine biosynthesis; L-histidine from 5-phospho-alpha-D-ribose 1-diphosphate: step 7/9. The chain is Histidinol-phosphate aminotransferase from Thermococcus kodakarensis (strain ATCC BAA-918 / JCM 12380 / KOD1) (Pyrococcus kodakaraensis (strain KOD1)).